A 39-amino-acid polypeptide reads, in one-letter code: U1-ectatotoxin-Et1b subunit A (39 aa).

A disulfide bridge links cysteine 14 with cysteine 35.

It belongs to the ectatomin family. Ectatomin-Et subfamily. Heterodimer of subunits A and B; disulfide-linked. As to expression, expressed by the venom gland.

The protein localises to the secreted. It is found in the target cell membrane. The protein is U1-ectatotoxin-Et1b subunit A of Ectatomma tuberculatum (Selva ant).